The primary structure comprises 160 residues: MGVTKKPDLTDPVLRAKLAKGMGHNYYGEPAWPNDLLYMFPVVILGTIACNVGLAVLEPSLVGEPANPFATPLEILPEWYFFPVFQILRTVPNKLLGVLLMAAVPAGLLTVPFIENVNKFQNPFRRPVATTVFLIGTVVAIWLGIGATLPIDTSLTLGLF.

3 helical membrane-spanning segments follow: residues 36 to 56 (LLYM…GLAV), 95 to 115 (LLGV…PFIE), and 131 to 151 (TVFL…TLPI).

It belongs to the cytochrome b family. PetD subfamily. As to quaternary structure, the 4 large subunits of the cytochrome b6-f complex are cytochrome b6, subunit IV (17 kDa polypeptide, petD), cytochrome f and the Rieske protein, while the 4 small subunits are petG, petL, petM and petN. The complex functions as a dimer.

Its subcellular location is the plastid. It is found in the chloroplast thylakoid membrane. Functionally, component of the cytochrome b6-f complex, which mediates electron transfer between photosystem II (PSII) and photosystem I (PSI), cyclic electron flow around PSI, and state transitions. The sequence is that of Cytochrome b6-f complex subunit 4 from Coleochaete orbicularis (Charophycean green alga).